Consider the following 285-residue polypeptide: Bifunctional protein FolD (285 aa).

Residues 166-168, Ser-191, and Ile-232 each bind NADP(+); that span reads GAS.

It belongs to the tetrahydrofolate dehydrogenase/cyclohydrolase family. In terms of assembly, homodimer.

It carries out the reaction (6R)-5,10-methylene-5,6,7,8-tetrahydrofolate + NADP(+) = (6R)-5,10-methenyltetrahydrofolate + NADPH. The catalysed reaction is (6R)-5,10-methenyltetrahydrofolate + H2O = (6R)-10-formyltetrahydrofolate + H(+). It functions in the pathway one-carbon metabolism; tetrahydrofolate interconversion. Functionally, catalyzes the oxidation of 5,10-methylenetetrahydrofolate to 5,10-methenyltetrahydrofolate and then the hydrolysis of 5,10-methenyltetrahydrofolate to 10-formyltetrahydrofolate. This is Bifunctional protein FolD from Edwardsiella ictaluri (strain 93-146).